Here is a 316-residue protein sequence, read N- to C-terminus: 4-diphosphocytidyl-2-C-methyl-D-erythritol kinase (316 aa).

Residue K32 is part of the active site. An ATP-binding site is contributed by 126-136 (PVGAGLGGGSA). The active site involves D168.

It belongs to the GHMP kinase family. IspE subfamily.

It carries out the reaction 4-CDP-2-C-methyl-D-erythritol + ATP = 4-CDP-2-C-methyl-D-erythritol 2-phosphate + ADP + H(+). It functions in the pathway isoprenoid biosynthesis; isopentenyl diphosphate biosynthesis via DXP pathway; isopentenyl diphosphate from 1-deoxy-D-xylulose 5-phosphate: step 3/6. Functionally, catalyzes the phosphorylation of the position 2 hydroxy group of 4-diphosphocytidyl-2C-methyl-D-erythritol. The protein is 4-diphosphocytidyl-2-C-methyl-D-erythritol kinase of Bifidobacterium longum subsp. infantis (strain ATCC 15697 / DSM 20088 / JCM 1222 / NCTC 11817 / S12).